Reading from the N-terminus, the 447-residue chain is Chitobiosyldiphosphodolichol beta-mannosyltransferase (447 aa).

The Cytoplasmic segment spans residues 1–2 (MT). A helical; Signal-anchor for type II membrane protein membrane pass occupies residues 3–23 (LVLLLSIFAICFSSVAFIQLL). The Lumenal segment spans residues 24–447 (PTRREKKSSE…IAGTFLGLVT (424 aa)).

Belongs to the glycosyltransferase group 1 family. Glycosyltransferase 33 subfamily.

The protein localises to the endoplasmic reticulum membrane. It catalyses the reaction an N,N'-diacetylchitobiosyl-diphospho-di-trans,poly-cis-dolichol + GDP-alpha-D-mannose = a beta-D-Man-(1-&gt;4)-beta-D-GlcNAc-(1-&gt;4)-alpha-D-GlcNAc-diphospho-di-trans,poly-cis-dolichol + GDP + H(+). The protein operates within protein modification; protein glycosylation. Functionally, participates in the formation of the lipid-linked precursor oligosaccharide for N-glycosylation. Involved in assembling the dolichol-pyrophosphate-GlcNAc(2)-Man(5) intermediate on the cytoplasmic surface of the ER. The chain is Chitobiosyldiphosphodolichol beta-mannosyltransferase from Arthroderma benhamiae (strain ATCC MYA-4681 / CBS 112371) (Trichophyton mentagrophytes).